Here is a 1378-residue protein sequence, read N- to C-terminus: Carboxypeptidase D (1378 aa).

The signal sequence occupies residues 1–37 (MASGWDERPPWRLESLRLLPPPPLLLLLLLLRSSAQA). Residues 38-1297 (AHIKKAEATT…DNRIFGLPRE (1260 aa)) lie on the Extracellular side of the membrane. One can recognise a Peptidase M14 1 domain in the interval 62-380 (HYYHEAALGE…ESLITLIEKV (319 aa)). Zn(2+) is bound by residues His139 and Glu142. The Cell attachment site signature appears at 162–164 (RGD). Asn172 and Asn217 each carry an N-linked (GlcNAc...) asparagine glycan. Residues 189–232 (RAREGDCGLGDSGPPGTSGRDNSRGRDLNRSFPDQFSTGEPPSL) are disordered. His257 lines the Zn(2+) pocket. Residue Tyr265 is modified to Phosphotyrosine. Ser270 is subject to Phosphoserine. Glu350 functions as the Proton donor/acceptor in the catalytic mechanism. 4 N-linked (GlcNAc...) asparagine glycosylation sites follow: Asn399, Asn410, Asn429, and Asn522. The Peptidase M14 2 domain maps to 502–792 (HHHHFPDMEI…RSLIQFMKQV (291 aa)). The Zn(2+) site is built by His564 and Glu567. Asn626 carries N-linked (GlcNAc...) asparagine glycosylation. His671 contributes to the Zn(2+) binding site. Glu762 serves as the catalytic Proton donor/acceptor. Asn811, Asn855, Asn867, Asn879, Asn953, and Asn976 each carry an N-linked (GlcNAc...) asparagine glycan. The interval 875-898 (TDANNESKKGKGHSTSTDDTSDPT) is disordered. Residues 930–1209 (RYHSYKDLSE…KSLLSMLVEV (280 aa)) form the Peptidase M14 3 domain. Positions 1039–1048 (RERAQEKDCT) are enriched in basic and acidic residues. Residues 1039–1068 (RERAQEKDCTSKTGHTNARGRDLDTDFTSN) are disordered. Asn1068 and Asn1140 each carry an N-linked (GlcNAc...) asparagine glycan. A helical membrane pass occupies residues 1298–1318 (LVVTVSGATMSALILTACIIW). Residues Cys1315, Cys1319, and Cys1321 are each lipidated (S-palmitoyl cysteine). Residues 1319–1378 (CICSIKSNRHKDGFHRLRQHHDEYEDEIRMMSTGSKKSLLSHEFQDETDTEEETLYSSKH) lie on the Cytoplasmic side of the membrane. Phosphoserine occurs at positions 1356 and 1359. Residues 1357-1378 (LLSHEFQDETDTEEETLYSSKH) are disordered. A phosphothreonine mark is found at Thr1366 and Thr1368.

This sequence belongs to the peptidase M14 family. It depends on Zn(2+) as a cofactor. As to expression, isoform 1 is widely expressed with highest levels in the hippocampus, spinal cord, atrium, colon, testis and ovaries. Detected in the liver of females but not males. Isoform 2 is not detected in brain or lung.

The protein resides in the cell membrane. It is found in the nucleus. It carries out the reaction Releases C-terminal Arg and Lys from polypeptides.. In Rattus norvegicus (Rat), this protein is Carboxypeptidase D.